A 574-amino-acid chain; its full sequence is Sulfate adenylyltransferase (574 aa).

The segment at 1–169 (MANTPHGGVL…IEAVNKLNHY (169 aa)) is N-terminal. Residues 170 to 394 (DYVALRYTPA…LRESNPPRAS (225 aa)) form a catalytic region. Sulfate is bound at residue Q197. ATP-binding positions include 197-200 (QTRN) and 291-294 (GRDH). Active-site residues include T198, R199, and N200. R199 is a sulfate binding site. A295 is a sulfate binding site. V333 contributes to the ATP binding site. Residues 395–574 (QGFTIFLTGY…LESEGYFERL (180 aa)) are allosteric regulation domain; adenylyl-sulfate kinase-like. 3'-phosphoadenylyl sulfate-binding positions include 434–437 (DTVR), R451, 477–478 (IA), and R516.

In the N-terminal section; belongs to the sulfate adenylyltransferase family. The protein in the C-terminal section; belongs to the APS kinase family. Homohexamer. Dimer of trimers.

The protein localises to the cytoplasm. It carries out the reaction sulfate + ATP + H(+) = adenosine 5'-phosphosulfate + diphosphate. It functions in the pathway sulfur metabolism; hydrogen sulfide biosynthesis; sulfite from sulfate: step 1/3. Its activity is regulated as follows. Allosterically inhibited by 3'-phosphoadenosine 5'-phosphosulfate (PAPS). Functionally, catalyzes the first intracellular reaction of sulfate assimilation, forming adenosine-5'-phosphosulfate (APS) from inorganic sulfate and ATP. Plays an important role in sulfate activation as a component of the biosynthesis pathway of sulfur-containing amino acids. The protein is Sulfate adenylyltransferase of Aspergillus niger.